We begin with the raw amino-acid sequence, 217 residues long: Phosphatidylserine decarboxylase proenzyme (217 aa).

S182 serves as the catalytic Schiff-base intermediate with substrate; via pyruvic acid. A Pyruvic acid (Ser); by autocatalysis modification is found at S182.

Belongs to the phosphatidylserine decarboxylase family. PSD-A subfamily. Heterodimer of a large membrane-associated beta subunit and a small pyruvoyl-containing alpha subunit. Pyruvate is required as a cofactor. Post-translationally, is synthesized initially as an inactive proenzyme. Formation of the active enzyme involves a self-maturation process in which the active site pyruvoyl group is generated from an internal serine residue via an autocatalytic post-translational modification. Two non-identical subunits are generated from the proenzyme in this reaction, and the pyruvate is formed at the N-terminus of the alpha chain, which is derived from the carboxyl end of the proenzyme. The post-translation cleavage follows an unusual pathway, termed non-hydrolytic serinolysis, in which the side chain hydroxyl group of the serine supplies its oxygen atom to form the C-terminus of the beta chain, while the remainder of the serine residue undergoes an oxidative deamination to produce ammonia and the pyruvoyl prosthetic group on the alpha chain.

Its subcellular location is the cell membrane. It catalyses the reaction a 1,2-diacyl-sn-glycero-3-phospho-L-serine + H(+) = a 1,2-diacyl-sn-glycero-3-phosphoethanolamine + CO2. Its pathway is phospholipid metabolism; phosphatidylethanolamine biosynthesis; phosphatidylethanolamine from CDP-diacylglycerol: step 2/2. Its function is as follows. Catalyzes the formation of phosphatidylethanolamine (PtdEtn) from phosphatidylserine (PtdSer). The protein is Phosphatidylserine decarboxylase proenzyme of Prosthecochloris aestuarii (strain DSM 271 / SK 413).